Here is a 603-residue protein sequence, read N- to C-terminus: Probable methyltransferase PMT20 (603 aa).

Residues 1–16 (MKSGKQSSQPEKGTSR) lie on the Cytoplasmic side of the membrane. The chain crosses the membrane as a helical; Signal-anchor for type II membrane protein span at residues 17 to 37 (ILSLTVLFIAFCGFSFYLGGI). At 38-603 (FCSERDKIVA…KLWFSSNQTS (566 aa)) the chain is on the lumenal side. N-linked (GlcNAc...) asparagine glycans are attached at residues asparagine 313 and asparagine 600.

It belongs to the methyltransferase superfamily.

Its subcellular location is the golgi apparatus membrane. This chain is Probable methyltransferase PMT20, found in Arabidopsis thaliana (Mouse-ear cress).